The sequence spans 475 residues: MSPKTETKASVGFKAGVKDYRLTYYTPEYQTKDTDILAAFRVTPQPGVPPEEAGAAVAAESSTGTWTTVWTDGLTSLDRYKGRCYDIEPVPGEETQFIAYVAYPLDLFEEGSVTNLFTSIVGNVFGFKALRALRLEDLRIPPSYSKTFQGPPHGIQVERDKLNKYGRPLLGCTIKPKLGLSAKNYGRAVYECLRGGLDFTKDDENVNSQPFMRWRDRFVFCAEALNKAQAETGEIKGHYLNATAGTCEEMMKRAIFARELGVPIVMHDYLTGGFTANTSLAHYCRDNGLLLHIHRAMHAVIDRQRNHGMHFRVLAKALRMSGGDHIHAGTVVGKLEGERDVTLGFVDLLRDDFIEKDRSRGIYFTQDWVSMPGVLPVASGGIHVWHMPALTEIFGDDSVLQFGGGTLGHPWGNAPGAVANRVALEACVQARNEGRDLAREGNEVIREACKWSPELAAACEIWKEIKFEFDVIDRL.

A propeptide spanning residues 1 to 2 (MS) is cleaved from the precursor. Proline 3 carries the N-acetylproline modification. Position 14 is an N6,N6,N6-trimethyllysine (lysine 14). Substrate is bound by residues asparagine 123 and threonine 173. Lysine 175 (proton acceptor) is an active-site residue. Lysine 177 serves as a coordination point for substrate. The Mg(2+) site is built by lysine 201, aspartate 203, and glutamate 204. Lysine 201 bears the N6-carboxylysine mark. Histidine 294 (proton acceptor) is an active-site residue. Residues arginine 295, histidine 327, and serine 379 each contribute to the substrate site.

It belongs to the RuBisCO large chain family. Type I subfamily. As to quaternary structure, heterohexadecamer of 8 large chains and 8 small chains; disulfide-linked. The disulfide link is formed within the large subunit homodimers. Requires Mg(2+) as cofactor. In terms of processing, the disulfide bond which can form in the large chain dimeric partners within the hexadecamer appears to be associated with oxidative stress and protein turnover.

Its subcellular location is the plastid. It is found in the chloroplast. It carries out the reaction 2 (2R)-3-phosphoglycerate + 2 H(+) = D-ribulose 1,5-bisphosphate + CO2 + H2O. The enzyme catalyses D-ribulose 1,5-bisphosphate + O2 = 2-phosphoglycolate + (2R)-3-phosphoglycerate + 2 H(+). In terms of biological role, ruBisCO catalyzes two reactions: the carboxylation of D-ribulose 1,5-bisphosphate, the primary event in carbon dioxide fixation, as well as the oxidative fragmentation of the pentose substrate in the photorespiration process. Both reactions occur simultaneously and in competition at the same active site. This Pinus thunbergii (Japanese black pine) protein is Ribulose bisphosphate carboxylase large chain.